The sequence spans 237 residues: Ribonuclease 3 (237 aa).

The 131-residue stretch at 3–133 folds into the RNase III domain; that stretch reads SRQPLLDALG…LLGAIYLQHG (131 aa). Glutamate 43 is a binding site for Mg(2+). Residue aspartate 47 is part of the active site. Residues aspartate 119 and glutamate 122 each coordinate Mg(2+). The active site involves glutamate 122. Residues 160–228 form the DRBM domain; sequence DWKTSLQELT…AAATWKALDV (69 aa).

It belongs to the ribonuclease III family. Homodimer. Mg(2+) is required as a cofactor.

The protein resides in the cytoplasm. The catalysed reaction is Endonucleolytic cleavage to 5'-phosphomonoester.. Digests double-stranded RNA. Involved in the processing of primary rRNA transcript to yield the immediate precursors to the large and small rRNAs (23S and 16S). Processes some mRNAs, and tRNAs when they are encoded in the rRNA operon. Processes pre-crRNA and tracrRNA of type II CRISPR loci if present in the organism. The protein is Ribonuclease 3 of Mycolicibacterium paratuberculosis (strain ATCC BAA-968 / K-10) (Mycobacterium paratuberculosis).